The primary structure comprises 114 residues: Ig kappa chain V region AH80-5 (114 aa).

Residues 1-22 (IVMTQTPSSKSVPVGDTVTINC) are framework-1. Residues 23-35 (QAAQSVYSNNRLS) are complementarity-determining-1. The segment at 36–50 (WFQQKPGQPPKGLIY) is framework-2. Residues 51–57 (YASTLAS) form a complementarity-determining-2 region. The segment at 58–93 (GVQQDPSRFKGSGSGTQFTLTISDVQCBBAATVYYC) is framework-3. The complementarity-determining-3 stretch occupies residues 94-103 (QGYKSSDTRA). The framework-4 stretch occupies residues 104–113 (FGGGTEVVVK).

The chain is Ig kappa chain V region AH80-5 from Oryctolagus cuniculus (Rabbit).